Here is a 93-residue protein sequence, read N- to C-terminus: Insertion element ISR1 uncharacterized 11 kDa protein A1 (93 aa).

Disordered regions lie at residues 14-33 (RRARTTRSARPAEGPGQERR) and 68-93 (RRRAPQASDGHAATVTCRWRPTSAGR).

The sequence is that of Insertion element ISR1 uncharacterized 11 kDa protein A1 from Rhizobium sp.